The chain runs to 857 residues: Zinc finger protein 574 (857 aa).

14 consecutive C2H2-type zinc fingers follow at residues 15–37 (YVCSECGEEYPSLEEALEHQQSH), 58–80 (YQCLECGLLLRTPEDLLAHQELH), 99–121 (YECPECKALFNSQDVWMAHRYTH), 206–228 (YKCSECTQLFQTPGEFLEHQGTH), 297–319 (FSCGDCSETFQTTKDLEEHQISH), 324–346 (FSCPLCSKVFPTYPEVGEHLKSH), 352–374 (YLCVDCGLAFVSEAVLLNHRRSH), 380–401 (FTCECGLTFLNMTRFLYHRRVH), 428–451 (FHCDPCGKDFPLLSQFLRHQRFVH), 457–479 (HKCPTCGKHFKKGSHLRTHMLTH), 485–507 (YSCTVCSKSFNSQANLLRHRLTH), 513–535 (YKCQLCGKAFSQSSTLQQHQYVH), 541–563 (YKCNECGINFHRPYRLLLHQYHH), and 569–591 (YKCQDCGLSFLLKRLLEVHQLGH). Residues 597–619 (HRCRECGTNFPSVQRLQDHRCSK) form a C2H2-type 15; degenerate zinc finger. C2H2-type zinc fingers lie at residues 628-651 (LECPICGKKVTSDAHLNTHVAAQH), 681-703 (LECSDCHKTFSTETSLQVHRRIH), 709-731 (YPCPDCGKAFRQSTHLKDHRRLH), 737-759 (FKCDVCGKAFTIAVRLSEHKRIH), and 765-787 (HSCPDCGRAYRSFSNLWKHRKLH). Positions 648 to 678 (AAQHSGNKRSNVSSGKGTPVLPRNKLKGGGG) are disordered. Residues 651 to 663 (HSGNKRSNVSSGK) are compositionally biased toward polar residues.

It belongs to the krueppel C2H2-type zinc-finger protein family.

It localises to the nucleus. Its function is as follows. May be involved in transcriptional regulation. This chain is Zinc finger protein 574 (znf574), found in Xenopus tropicalis (Western clawed frog).